The sequence spans 90 residues: Small ribosomal subunit protein bS16 (90 aa).

The protein belongs to the bacterial ribosomal protein bS16 family.

The sequence is that of Small ribosomal subunit protein bS16 from Streptococcus pneumoniae (strain Hungary19A-6).